The sequence spans 184 residues: Effector CFEM1 (184 aa).

The first 17 residues, 1-17, serve as a signal peptide directing secretion; the sequence is MKYSVAFVALAAVAAQA. The CFEM domain maps to 18-112; that stretch reads QSLADVPKCA…PTTTAAATST (95 aa). 4 cysteine pairs are disulfide-bonded: cysteine 26–cysteine 68, cysteine 30–cysteine 63, cysteine 41–cysteine 48, and cysteine 50–cysteine 85. Residue aspartate 45 coordinates heme. Disordered regions lie at residues 83-106 and 136-163; these read NLCKNPPKESEAKSTAEEEKPTTT and IIPTTAAEEPATSTPAAATPTKGPEQAN. Residues 88–103 show a composition bias toward basic and acidic residues; the sequence is PPKESEAKSTAEEEKP. Asparagine 163 carries the GPI-anchor amidated asparagine lipid modification. Positions 164–184 are cleaved as a propeptide — removed in mature form; sequence GAAGLKGLGALAMAAFAALAL.

The protein belongs to the RBT5 family. In terms of assembly, interacts with Z.mays LRR5; the interaction is direct. Interacts (via CFEM domain) with Z.mays WAK17 isoform 2; the interaction is direct.

The protein resides in the secreted. It localises to the cell wall. The protein localises to the cell membrane. Its subcellular location is the cell septum. It is found in the cytoplasm. Suppresses host programmed cell death during infection by binding to Z.mays WAK17 isoform 2 and Z.mays LRR5, to prevent activation of Z.mays WAK17 isoform 1 and the downstream hypersensitive response. This is Effector CFEM1 from Gibberella zeae (strain ATCC MYA-4620 / CBS 123657 / FGSC 9075 / NRRL 31084 / PH-1) (Wheat head blight fungus).